The sequence spans 428 residues: Arginine biosynthesis bifunctional protein ArgJ, mitochondrial (428 aa).

The substrate site is built by T171, K197, T208, E294, N423, and S428. The Nucleophile role is filled by T208.

Belongs to the ArgJ family. Heterodimer of an alpha and a beta chain. Post-translationally, the alpha and beta chains are autoproteolytically processed from a single precursor protein within the mitochondrion.

It is found in the mitochondrion matrix. The enzyme catalyses N(2)-acetyl-L-ornithine + L-glutamate = N-acetyl-L-glutamate + L-ornithine. It catalyses the reaction L-glutamate + acetyl-CoA = N-acetyl-L-glutamate + CoA + H(+). The protein operates within amino-acid biosynthesis; L-arginine biosynthesis; L-ornithine and N-acetyl-L-glutamate from L-glutamate and N(2)-acetyl-L-ornithine (cyclic): step 1/1. It participates in amino-acid biosynthesis; L-arginine biosynthesis; N(2)-acetyl-L-ornithine from L-glutamate: step 1/4. Functionally, catalyzes two activities which are involved in the cyclic version of arginine biosynthesis: the synthesis of acetylglutamate from glutamate and acetyl-CoA, and of ornithine by transacetylation between acetylornithine and glutamate. The chain is Arginine biosynthesis bifunctional protein ArgJ, mitochondrial from Komagataella phaffii (strain GS115 / ATCC 20864) (Yeast).